We begin with the raw amino-acid sequence, 95 residues long: Large ribosomal subunit protein uL23 (95 aa).

This sequence belongs to the universal ribosomal protein uL23 family. In terms of assembly, part of the 50S ribosomal subunit. Contacts protein L29, and trigger factor when it is bound to the ribosome.

Functionally, one of the early assembly proteins it binds 23S rRNA. One of the proteins that surrounds the polypeptide exit tunnel on the outside of the ribosome. Forms the main docking site for trigger factor binding to the ribosome. The polypeptide is Large ribosomal subunit protein uL23 (Geobacillus kaustophilus (strain HTA426)).